The chain runs to 108 residues: Cell cycle protein GpsB (108 aa).

Residues 32 to 69 are a coiled coil; that stretch reads LDNVIKDYENFNAQIEALKAENEALKKAKFQARNTVSA.

It belongs to the GpsB family. As to quaternary structure, forms polymers through the coiled coil domains. Interacts with PBP1, MreC and EzrA.

The protein resides in the cytoplasm. Functionally, divisome component that associates with the complex late in its assembly, after the Z-ring is formed, and is dependent on DivIC and PBP2B for its recruitment to the divisome. Together with EzrA, is a key component of the system that regulates PBP1 localization during cell cycle progression. Its main role could be the removal of PBP1 from the cell pole after pole maturation is completed. Also contributes to the recruitment of PBP1 to the division complex. Not essential for septum formation. The chain is Cell cycle protein GpsB from Streptococcus pyogenes serotype M28 (strain MGAS6180).